The sequence spans 185 residues: Ribosome-recycling factor (185 aa).

This sequence belongs to the RRF family.

The protein resides in the cytoplasm. Functionally, responsible for the release of ribosomes from messenger RNA at the termination of protein biosynthesis. May increase the efficiency of translation by recycling ribosomes from one round of translation to another. The sequence is that of Ribosome-recycling factor from Pasteurella multocida (strain Pm70).